The chain runs to 326 residues: Phospho-N-acetylmuramoyl-pentapeptide-transferase (326 aa).

The next 10 helical transmembrane spans lie at 3–23 (LPTKIFFTSFIFGFILSPYFI), 51–71 (TPTMGGVVILTSSLLPILFWV), 77–97 (ILLLVSITLSFALIGFIDDYL), 113–133 (ILIQFIVALVGMSVFKLYFTE), 143–163 (GIMIDFSYLYAPFAAFIVVGS), 175–195 (GLAATQIIASFVSLGLVAYMT), 199–219 (ISVILFCITFIGATLSFLWFN), 225–245 (IFMGDIGSLSIGAALGLTSVL), 250–270 (VLFAVIGVIFVIETLSVVIQV), and 306–326 (IVIKFLIITIVCSVFTVAFLL).

This sequence belongs to the glycosyltransferase 4 family. MraY subfamily. It depends on Mg(2+) as a cofactor.

It is found in the cell membrane. The enzyme catalyses UDP-N-acetyl-alpha-D-muramoyl-L-alanyl-gamma-D-glutamyl-meso-2,6-diaminopimeloyl-D-alanyl-D-alanine + di-trans,octa-cis-undecaprenyl phosphate = di-trans,octa-cis-undecaprenyl diphospho-N-acetyl-alpha-D-muramoyl-L-alanyl-D-glutamyl-meso-2,6-diaminopimeloyl-D-alanyl-D-alanine + UMP. It participates in cell wall biogenesis; peptidoglycan biosynthesis. Its function is as follows. Catalyzes the initial step of the lipid cycle reactions in the biosynthesis of the cell wall peptidoglycan: transfers peptidoglycan precursor phospho-MurNAc-pentapeptide from UDP-MurNAc-pentapeptide onto the lipid carrier undecaprenyl phosphate, yielding undecaprenyl-pyrophosphoryl-MurNAc-pentapeptide, known as lipid I. This Wolbachia sp. subsp. Brugia malayi (strain TRS) protein is Phospho-N-acetylmuramoyl-pentapeptide-transferase.